A 331-amino-acid polypeptide reads, in one-letter code: Ketol-acid reductoisomerase (NADP(+)) (331 aa).

A KARI N-terminal Rossmann domain is found at 2–182 (ARMYYDEDAN…GGTRGGVLET (181 aa)). Residues 25–28 (YGSQ), S51, S53, and 83–86 (DEVQ) contribute to the NADP(+) site. The active site involves H108. G134 is an NADP(+) binding site. The region spanning 183–328 (TFREETETDL…KDLRAMFSWL (146 aa)) is the KARI C-terminal knotted domain. Residues D191, E195, E227, and E231 each contribute to the Mg(2+) site. A substrate-binding site is contributed by S252.

The protein belongs to the ketol-acid reductoisomerase family. The cofactor is Mg(2+).

The catalysed reaction is (2R)-2,3-dihydroxy-3-methylbutanoate + NADP(+) = (2S)-2-acetolactate + NADPH + H(+). It catalyses the reaction (2R,3R)-2,3-dihydroxy-3-methylpentanoate + NADP(+) = (S)-2-ethyl-2-hydroxy-3-oxobutanoate + NADPH + H(+). The protein operates within amino-acid biosynthesis; L-isoleucine biosynthesis; L-isoleucine from 2-oxobutanoate: step 2/4. It functions in the pathway amino-acid biosynthesis; L-valine biosynthesis; L-valine from pyruvate: step 2/4. Involved in the biosynthesis of branched-chain amino acids (BCAA). Catalyzes an alkyl-migration followed by a ketol-acid reduction of (S)-2-acetolactate (S2AL) to yield (R)-2,3-dihydroxy-isovalerate. In the isomerase reaction, S2AL is rearranged via a Mg-dependent methyl migration to produce 3-hydroxy-3-methyl-2-ketobutyrate (HMKB). In the reductase reaction, this 2-ketoacid undergoes a metal-dependent reduction by NADPH to yield (R)-2,3-dihydroxy-isovalerate. The sequence is that of Ketol-acid reductoisomerase (NADP(+)) from Nostoc sp. (strain PCC 7120 / SAG 25.82 / UTEX 2576).